The sequence spans 610 residues: 1,8-cineol synthase, chloroplastic (610 aa).

A chloroplast-targeting transit peptide spans 1–51; it reads MNHHLIITPIFHLQIMLPVATLKRPPPPAATCSIYSFSRGTPSLVSKARLS. (2E)-geranyl diphosphate contacts are provided by Arg-322, Asp-359, Asp-363, Arg-500, and Asn-503. Residues Asp-359 and Asp-363 each contribute to the Mg(2+) site. A DDXXD motif motif is present at residues 359–363; it reads DDVYD. Residues Asn-503, Thr-507, and Glu-511 each contribute to the Mg(2+) site.

It belongs to the terpene synthase family. Tpsb subfamily. As to quaternary structure, monomer. It depends on Mg(2+) as a cofactor. Mn(2+) serves as cofactor. As to expression, confined to buds and flowers.

The protein localises to the plastid. The protein resides in the chloroplast. It carries out the reaction (2E)-geranyl diphosphate + H2O = 1,8-cineole + diphosphate. The catalysed reaction is (2E)-geranyl diphosphate = limonene + diphosphate. The enzyme catalyses (2E)-geranyl diphosphate = sabinene + diphosphate. It catalyses the reaction (2E)-geranyl diphosphate = (E)-beta-ocimene + diphosphate. It carries out the reaction (2E)-geranyl diphosphate = beta-myrcene + diphosphate. The catalysed reaction is (2E)-geranyl diphosphate = alpha-pinene + diphosphate. The enzyme catalyses (2E)-geranyl diphosphate + H2O = (S)-alpha-terpineol + diphosphate. Its pathway is secondary metabolite biosynthesis; terpenoid biosynthesis. In terms of biological role, monoterpene synthase involved in the biosynthesis of monoterpene natural products of the 'cineole cassette', volatile compounds present in floral scent. Catalyzes the conversion of (2E)-geranyl diphosphate (GPP) into 1,8-cineole and, as minor products, limonene, sabinene, (E)-beta-ocimene, beta-myrcene, alpha-pinene and alpha-terpineol. The sequence is that of 1,8-cineol synthase, chloroplastic from Nicotiana suaveolens (Australian tobacco).